The following is a 704-amino-acid chain: Polyribonucleotide nucleotidyltransferase (704 aa).

Residues D487 and D493 each coordinate Mg(2+). The KH domain occupies 554–613 (PRLLTIKIHPDKIREVIGKGGSTIQAITKETGTQIDIQDDGTIIIASVNAIAAQAAKSRI). The S1 motif domain occupies 623–691 (GRIYEGKVAK…KQGRIRLSIK (69 aa)).

Belongs to the polyribonucleotide nucleotidyltransferase family. As to quaternary structure, component of the RNA degradosome, which is a multiprotein complex involved in RNA processing and mRNA degradation. The cofactor is Mg(2+).

It localises to the cytoplasm. It catalyses the reaction RNA(n+1) + phosphate = RNA(n) + a ribonucleoside 5'-diphosphate. Functionally, involved in mRNA degradation. Catalyzes the phosphorolysis of single-stranded polyribonucleotides processively in the 3'- to 5'-direction. In Xanthomonas euvesicatoria pv. vesicatoria (strain 85-10) (Xanthomonas campestris pv. vesicatoria), this protein is Polyribonucleotide nucleotidyltransferase.